Here is a 361-residue protein sequence, read N- to C-terminus: Histidinol-phosphate aminotransferase (361 aa).

An N6-(pyridoxal phosphate)lysine modification is found at lysine 219.

The protein belongs to the class-II pyridoxal-phosphate-dependent aminotransferase family. Histidinol-phosphate aminotransferase subfamily. As to quaternary structure, homodimer. The cofactor is pyridoxal 5'-phosphate.

The enzyme catalyses L-histidinol phosphate + 2-oxoglutarate = 3-(imidazol-4-yl)-2-oxopropyl phosphate + L-glutamate. It participates in amino-acid biosynthesis; L-histidine biosynthesis; L-histidine from 5-phospho-alpha-D-ribose 1-diphosphate: step 7/9. The protein is Histidinol-phosphate aminotransferase of Acinetobacter baumannii (strain ACICU).